Reading from the N-terminus, the 817-residue chain is Probable inorganic carbon transporter subunit DabA (817 aa).

Positions 301, 303, 491, and 506 each coordinate Zn(2+). 2 disordered regions span residues 598 to 617 and 794 to 817; these read NTSV…ERRA and GWHA…GVPS.

It belongs to the inorganic carbon transporter (TC 9.A.2) DabA family. In terms of assembly, forms a complex with DabB. Requires Zn(2+) as cofactor.

It is found in the cell inner membrane. In terms of biological role, part of an energy-coupled inorganic carbon pump. This chain is Probable inorganic carbon transporter subunit DabA, found in Salinibacter ruber (strain DSM 13855 / M31).